The chain runs to 394 residues: 8-amino-7-oxononanoate synthase (394 aa).

Substrate is bound at residue R21. Residue 112-113 coordinates pyridoxal 5'-phosphate; sequence GY. H137 lines the substrate pocket. Residues S183, H211, and T239 each coordinate pyridoxal 5'-phosphate. Residue K242 is modified to N6-(pyridoxal phosphate)lysine. A substrate-binding site is contributed by T358.

Belongs to the class-II pyridoxal-phosphate-dependent aminotransferase family. BioF subfamily. In terms of assembly, homodimer. The cofactor is pyridoxal 5'-phosphate.

The enzyme catalyses 6-carboxyhexanoyl-[ACP] + L-alanine + H(+) = (8S)-8-amino-7-oxononanoate + holo-[ACP] + CO2. It functions in the pathway cofactor biosynthesis; biotin biosynthesis. Catalyzes the decarboxylative condensation of pimeloyl-[acyl-carrier protein] and L-alanine to produce 8-amino-7-oxononanoate (AON), [acyl-carrier protein], and carbon dioxide. The protein is 8-amino-7-oxononanoate synthase of Burkholderia pseudomallei (strain 1710b).